The primary structure comprises 61 residues: Sperm protamine P1 (61 aa).

Positions 1–61 (MARYRHSRSR…RRYHSHRRRY (61 aa)) are disordered.

It belongs to the protamine P1 family. Testis.

Its subcellular location is the nucleus. The protein resides in the chromosome. Its function is as follows. Protamines substitute for histones in the chromatin of sperm during the haploid phase of spermatogenesis. They compact sperm DNA into a highly condensed, stable and inactive complex. The chain is Sperm protamine P1 (PRM1) from Notoryctes typhlops (Southern marsupial mole).